A 262-amino-acid chain; its full sequence is Glycerol uptake facilitator protein (262 aa).

The Cytoplasmic segment spans residues 1 to 7 (MNFCSKK). The chain crosses the membrane as a helical span at residues 8-36 (KILKQCFFEFLGTGLIIFLGISSLVVSKL). Over 37 to 41 (TNFHF) the chain is Extracellular. A helical membrane pass occupies residues 42–62 (NHCEISCIWGLGVFISICFCS). Over 63–65 (SVS) the chain is Cytoplasmic. Residues 66-69 (GAHL) lie within the membrane without spanning it. Residues 70 to 72 (NPA) carry the NPA 1 motif. An intramembrane region (helical) is located at residues 70-80 (NPAITIFLFLS). Over 81 to 86 (SQFNKK) the chain is Cytoplasmic. A helical transmembrane segment spans residues 87–110 (KVIPYILSQISGTFFFTFLIYLIF). Over 111–145 (NNLLNSFESKYNIVRGTKKSLELASLFCVFPKENY) the chain is Extracellular. Residues 146–171 (NFIHDFILEILIGIIFIIILMKLSEK) form a helical membrane-spanning segment. Residues 172–180 (NNLFKFYKF) lie on the Cytoplasmic side of the membrane. Residues 181–197 (INPFLIGTLVIIINLFL) form a helical membrane-spanning segment. The Extracellular segment spans residues 198–201 (TSYS). An intramembrane segment occupies 202–205 (NITL). The NPA 2 motif lies at 206–208 (NPA). Positions 206 to 219 (NPARDLGPRIFLSL) form an intramembrane region, helical. Topologically, residues 220–234 (IGWGKLAFTGDDNII) are extracellular. Residues 235 to 259 (FPYFLIPTIAPIIGINLGGWIYILY) form a helical membrane-spanning segment. Residues 260 to 262 (IKK) are Cytoplasmic-facing.

Belongs to the MIP/aquaporin (TC 1.A.8) family.

It localises to the cell membrane. The catalysed reaction is glycerol(in) = glycerol(out). Mediates glycerol diffusion across the cytoplasmic membrane via a pore-type mechanism. In Buchnera aphidicola subsp. Schizaphis graminum (strain Sg), this protein is Glycerol uptake facilitator protein (glpF).